We begin with the raw amino-acid sequence, 572 residues long: Sorting nexin 2B (572 aa).

2 disordered regions span residues 1–97 (MMGS…SSYL) and 114–136 (SEINGSEDGHSQSSDSLSRSPSS). The span at 9-30 (ESHLHSSKEEMEKLFLREDGDP) shows a compositional bias: basic and acidic residues. A compositionally biased stretch (polar residues) spans 32 to 53 (TKSNVNGDKSNSNYRSAMSTLF). Over residues 124 to 136 (SQSSDSLSRSPSS) the composition is skewed to low complexity. A Phosphoserine modification is found at Ser-133. One can recognise a PX domain in the interval 147 to 266 (SNPQKEQEAT…KVFLQAQGKL (120 aa)). A 1,2-diacyl-sn-glycero-3-phospho-(1D-myo-inositol-3-phosphate) contacts are provided by Arg-190, Lys-216, and Arg-233. A BAR domain is found at 318–572 (LRQSVSNDWG…ETRQYDRESS (255 aa)).

Belongs to the sorting nexin family. Homodimer. Heterodimer with SNX1 or SNX2B. Component of the retromer complex which consists of VPS29 (MAG1), VPS26 (VPS26A or VPS26B), VPS35 (VPS35A or VPS35B or VPS35C), VPS5/17 (SNX1 or SNX2A or SNX2B). In terms of tissue distribution, ubiquitously expressed.

Its subcellular location is the cytoplasm. The protein resides in the endosome membrane. It is found in the prevacuolar compartment membrane. It localises to the golgi apparatus. The protein localises to the trans-Golgi network membrane. Plays a role in vesicular protein sorting. Acts at the crossroads between the secretory and endocytic pathways. Is involved in the endosome to vacuole protein transport and, as component of the membrane-associated retromer complex, is also involved in endosome-to-Golgi retrograde transport. This chain is Sorting nexin 2B (SNX2B), found in Arabidopsis thaliana (Mouse-ear cress).